A 337-amino-acid chain; its full sequence is MEENCEDCMKWEEELYWTHFQTLHFTQLLLPGFHNRLVIPRKFSTHCKRKLPQIVTLKSPSGVTYNVGVEEDDEKTMAFRFGWDKFVKDHSLEENDLLVFKFHGVSEFEVLVFDGQTLCEKPTSYFVRKCGHAEKTKASHTGYEQEEHINSDIDTASAQLPVISPTSTVRVSEGKYPLSGFKKMRRELSNDNLDQKADVEMISAGSNKKALSLAKRAISPDGFLVFMKRSHVVSKCFLTIPYKWCVKNMLITRQEVVMQVDQTKWEMKFNIFGARGSGGISTGWKKFVQDNNLREGDVCVFEPANSETKPLHLNVYIFRGEETERTNNVDPVYTISE.

DNA-binding regions (TF-B3) lie at residues 22-116 and 223-321; these read TLHF…FDGQ and FLVF…FRGE.

The protein localises to the nucleus. In Arabidopsis thaliana (Mouse-ear cress), this protein is B3 domain-containing protein REM16 (REM16).